The following is a 238-amino-acid chain: Ribonuclease 3 (238 aa).

One can recognise an RNase III domain in the interval 17–140 (YATLEKALGY…LMAGVYLEAG (124 aa)). Residue Glu-53 coordinates Mg(2+). Residue Asp-57 is part of the active site. Ser-126 and Glu-129 together coordinate Mg(2+). Glu-129 is an active-site residue. Positions 167–236 (DYKTALQELT…AYQALQKLKE (70 aa)) constitute a DRBM domain.

The protein belongs to the ribonuclease III family. In terms of assembly, homodimer. Requires Mg(2+) as cofactor.

Its subcellular location is the cytoplasm. It carries out the reaction Endonucleolytic cleavage to 5'-phosphomonoester.. In terms of biological role, digests double-stranded RNA. Involved in the processing of primary rRNA transcript to yield the immediate precursors to the large and small rRNAs (23S and 16S). Processes some mRNAs, and tRNAs when they are encoded in the rRNA operon. Processes pre-crRNA and tracrRNA of type II CRISPR loci if present in the organism. The protein is Ribonuclease 3 of Helicobacter pylori (strain Shi470).